The sequence spans 171 residues: Protein-export protein SecB (171 aa).

Belongs to the SecB family. As to quaternary structure, homotetramer, a dimer of dimers. One homotetramer interacts with 1 SecA dimer.

It localises to the cytoplasm. In terms of biological role, one of the proteins required for the normal export of preproteins out of the cell cytoplasm. It is a molecular chaperone that binds to a subset of precursor proteins, maintaining them in a translocation-competent state. It also specifically binds to its receptor SecA. This Histophilus somni (strain 2336) (Haemophilus somnus) protein is Protein-export protein SecB.